An 816-amino-acid chain; its full sequence is Sodium/hydrogen exchanger 1 (816 aa).

Topologically, residues 1–98 are extracellular; the sequence is MLLWSAVRGL…FPVLGIDYTH (98 aa). Residues 37-50 are compositionally biased toward polar residues; that stretch reads LQLSPTDSTTPDSQ. The disordered stretch occupies residues 37-79; sequence LQLSPTDSTTPDSQPSRERSIGDVTTAPPEVTPESRPVNRSVT. A glycan (N-linked (GlcNAc...) asparagine) is linked at N75. A helical membrane pass occupies residues 99–121; it reads VRTPFEISLWILLACLMKIGFHV. Residues 122–130 lie on the Cytoplasmic side of the membrane; the sequence is IPTISSIVP. A helical transmembrane segment spans residues 131–148; the sequence is ESCLLIVVGLLVGGLIKG. The Extracellular portion of the chain corresponds to 149 to 158; it reads VGEKPPFLQS. The chain crosses the membrane as a helical span at residues 159–176; sequence EVFFLFLLPPIILDAGYF. Over 177-186 the chain is Cytoplasmic; sequence LPLRQFTENL. The helical transmembrane segment at 187-215 threads the bilayer; it reads GTILIFAVVGTLWNAFFLGGLMYAVCLVG. The Extracellular segment spans residues 216–222; the sequence is GEQINNI. A helical membrane pass occupies residues 223–249; the sequence is GLLDNLLFGSIISAVDPVAVLAVFEEI. Residues 250 to 252 are Cytoplasmic-facing; the sequence is HIN. Residues 253–283 traverse the membrane as a helical segment; it reads ELLHILVFGESLLNDAVTVVLYHLFEEFANY. The Extracellular portion of the chain corresponds to 284-287; sequence DHVG. Residues 288–322 form a helical membrane-spanning segment; the sequence is IVDIVLGFLSFFVVALGGVFVGVVYGVIAAFTSRF. The Cytoplasmic segment spans residues 323–328; sequence TAHIRV. The chain crosses the membrane as a helical span at residues 329–341; it reads IEPLFVFLYSYMA. Topologically, residues 342–350 are extracellular; it reads YLSAELFHL. The helical transmembrane segment at 351–371 threads the bilayer; that stretch reads SGIMALIASGVVMRPYVEANI. Over 372 to 373 the chain is Cytoplasmic; the sequence is SH. The helical transmembrane segment at 374-404 threads the bilayer; that stretch reads KSHTTIKYFLKMWSSVSETLIFIFLGVSTVA. Residues 405–410 are Extracellular-facing; that stretch reads GSHHWN. Residues 411–438 traverse the membrane as a helical segment; sequence WTFVISTLLFCLIARVLGVLGLTWFINK. Residues 439 to 444 lie on the Cytoplasmic side of the membrane; that stretch reads FRIVKL. A helical transmembrane segment spans residues 445 to 469; the sequence is TPKDQFIIAYGGLRGAIAFSLGYLL. Residues 470–475 are Extracellular-facing; the sequence is DKKHFP. The helical transmembrane segment at 476-505 threads the bilayer; sequence MCDLFLTAIITVIFFTVFVQGMTIRPLVDL. The segment at 503 to 545 is interaction with TESC; it reads VDLLAVKKKQETKRSINEEIHTQFLDHLLTGIEDICGHYGHHH. Over 506–816 the chain is Cytoplasmic; the sequence is LAVKKKQETK…EGEPFIPKGQ (311 aa). Positions 509 to 516 are PI(4,5)P2-binding region; sequence KKKQETKR. Residues 515–545 are interaction with CHP2; the sequence is KRSINEEIHTQFLDHLLTGIEDICGHYGHHH. Residues 540 to 545 are confers pH-dependent PI(4,5)P2 binding; sequence HYGHHH. Residues 552–560 are PI(4,5)P2-binding region; sequence RFNKKYVKK. Phosphoserine is present on residues S599 and S602. T603 is subject to Phosphothreonine. Phosphoserine occurs at positions 605 and 648. The tract at residues 633-816 is interaction with TESC; the sequence is KILRNNLQKT…EGEPFIPKGQ (184 aa). The interval 633 to 816 is interaction with CALM1; that stretch reads KILRNNLQKT…EGEPFIPKGQ (184 aa). An interaction with PPP3CA region spans residues 684-687; the sequence is LTVP. Phosphoserine is present on residues S693, S697, and S703. The interaction with PPP3CA stretch occupies residues 715–720; it reads PVITID. A phosphoserine mark is found at S723, S726, S729, S786, S788, and S797. The disordered stretch occupies residues 748-816; it reads PRVAEEAAEE…EGEPFIPKGQ (69 aa). Residues 783-792 show a composition bias toward polar residues; sequence PSDSPSSQRM.

This sequence belongs to the monovalent cation:proton antiporter 1 (CPA1) transporter (TC 2.A.36) family. Homodimer; dimerization is crucial for its function. Oligomer. Interacts with CALM in a calcium-dependent manner. Interacts with TESC. Interacts (via the juxtamembrane region of the cytoplasmic C-terminal domain) with CHP1; the interaction occurs at the plasma membrane in a calcium-dependent manner. Interacts with CHP2; the interaction occurs in a calcium-dependent manner. Interacts with EZR; regulates the cytoskeletal interactions of SLC9A1 and promotes stress fiber formation. Ubiquitinated, leading to its degradation by the proteasome. Ubiquitination is reduced by CHP1. Post-translationally, O-glycosylated. In terms of processing, palmitoylated; may play a major role in SLC9A1 regulation. Phosphorylation at Ser-648 by AKT1 reduces SLC9A1 binding to CALM1. As to expression, kidney and intestine.

Its subcellular location is the cell membrane. The protein resides in the basolateral cell membrane. It carries out the reaction Na(+)(in) + H(+)(out) = Na(+)(out) + H(+)(in). The catalysed reaction is Li(+)(out) + H(+)(in) = Li(+)(in) + H(+)(out). It catalyses the reaction Li(+)(in) + Na(+)(out) = Li(+)(out) + Na(+)(in). With respect to regulation, activated at acidic pHs. Inhibited by cariporide and eniporide. Phosphatidylinositol 4,5-bisphosphate (PI(4,5)P2) and phosphatidylinositol 3,4,5-trisphosphate (PI(3,4,5)P3) bind and differentially regulate SLC9A1 activity. Electroneutral Na(+) /H(+) antiporter that extrudes Na(+) in exchange for external protons driven by the inward sodium ion chemical gradient, protecting cells from acidification that occurs from metabolism. Exchanges intracellular H(+) ions for extracellular Na(+) in 1:1 stoichiometry. Plays a key role in maintening intracellular pH neutral and cell volume, and thus is important for cell growth, proliferation, migration and survival. In addition, can transport lithium Li(+) and functions also as a Na(+)/Li(+) antiporter. SLC9A1 also functions in membrane anchoring and organization of scaffolding complexes that coordinate signaling inputs. The protein is Sodium/hydrogen exchanger 1 (SLC9A1) of Oryctolagus cuniculus (Rabbit).